A 439-amino-acid polypeptide reads, in one-letter code: Xylose isomerase (439 aa).

Active-site residues include histidine 101 and aspartate 104. Positions 232, 268, 271, 296, 307, 309, and 339 each coordinate Mg(2+).

The protein belongs to the xylose isomerase family. As to quaternary structure, homotetramer. Requires Mg(2+) as cofactor.

It is found in the cytoplasm. It carries out the reaction alpha-D-xylose = alpha-D-xylulofuranose. In Haemophilus influenzae (strain PittEE), this protein is Xylose isomerase.